Consider the following 582-residue polypeptide: Sulfite reductase [NADPH] hemoprotein beta-component (582 aa).

The span at 1-12 shows a compositional bias: basic and acidic residues; that stretch reads MDLKVKVDRSRD. Positions 1 to 26 are disordered; it reads MDLKVKVDRSRDVSQPLDKLGPDETL. [4Fe-4S] cluster is bound by residues C447, C453, C492, and C496. C496 contacts siroheme.

Belongs to the nitrite and sulfite reductase 4Fe-4S domain family. Alpha(8)-beta(8). The alpha component is a flavoprotein, the beta component is a hemoprotein. It depends on siroheme as a cofactor. [4Fe-4S] cluster is required as a cofactor.

The enzyme catalyses hydrogen sulfide + 3 NADP(+) + 3 H2O = sulfite + 3 NADPH + 4 H(+). The protein operates within sulfur metabolism; hydrogen sulfide biosynthesis; hydrogen sulfide from sulfite (NADPH route): step 1/1. Functionally, component of the sulfite reductase complex that catalyzes the 6-electron reduction of sulfite to sulfide. This is one of several activities required for the biosynthesis of L-cysteine from sulfate. The polypeptide is Sulfite reductase [NADPH] hemoprotein beta-component (Afipia carboxidovorans (strain ATCC 49405 / DSM 1227 / KCTC 32145 / OM5) (Oligotropha carboxidovorans)).